A 185-amino-acid polypeptide reads, in one-letter code: Ribosome-recycling factor (185 aa).

This sequence belongs to the RRF family.

The protein resides in the cytoplasm. Its function is as follows. Responsible for the release of ribosomes from messenger RNA at the termination of protein biosynthesis. May increase the efficiency of translation by recycling ribosomes from one round of translation to another. In Bacillus licheniformis (strain ATCC 14580 / DSM 13 / JCM 2505 / CCUG 7422 / NBRC 12200 / NCIMB 9375 / NCTC 10341 / NRRL NRS-1264 / Gibson 46), this protein is Ribosome-recycling factor.